The sequence spans 382 residues: Lipid-A-disaccharide synthase (382 aa).

Belongs to the LpxB family.

It catalyses the reaction 2-N,3-O-bis[(3R)-3-hydroxytetradecanoyl]-alpha-D-glucosaminyl 1-phosphate + UDP-2-N,3-O-bis[(3R)-3-hydroxytetradecanoyl]-alpha-D-glucosamine = lipid A disaccharide (E. coli) + UDP + H(+). The catalysed reaction is a lipid X + a UDP-2-N,3-O-bis[(3R)-3-hydroxyacyl]-alpha-D-glucosamine = a lipid A disaccharide + UDP + H(+). Its pathway is glycolipid biosynthesis; lipid IV(A) biosynthesis; lipid IV(A) from (3R)-3-hydroxytetradecanoyl-[acyl-carrier-protein] and UDP-N-acetyl-alpha-D-glucosamine: step 5/6. Its function is as follows. Condensation of UDP-2,3-diacylglucosamine and 2,3-diacylglucosamine-1-phosphate to form lipid A disaccharide, a precursor of lipid A, a phosphorylated glycolipid that anchors the lipopolysaccharide to the outer membrane of the cell. The protein is Lipid-A-disaccharide synthase of Salmonella paratyphi B (strain ATCC BAA-1250 / SPB7).